Consider the following 475-residue polypeptide: Ankyrin repeat, SAM and basic leucine zipper domain-containing protein 1 (475 aa).

The interval 1-38 is disordered; it reads MATGSLRGLAVAGGGESSDSEDDGWEIGYLDRPPQKLK. 3 positions are modified to phosphoserine: Ser17, Ser18, and Ser20. ANK repeat units follow at residues 45-74, 78-107, 110-144, 148-177, 181-210, and 214-243; these read EKNETFKKALTTGDTSLVKELLDSGISVDS, YGWTPLMYAASVANVELVRVLLDRGANASF, DKQTILITACSARGSEEQILKCVELLLSRNADPNV, RLMTPIMYAARDGHPQVVALLVAHGAEVNI, NGYTALTWAARQGHKSVVLKLLELGANKTL, and DGKTPSEIAKRNKHLEIFNLLSLTLNPLEG. Residues 272 to 334 enclose the SAM domain; the sequence is SYTAFGDLEI…KILAALKELE (63 aa).

Interacts with DDX4, PIWIL1, RANBP9 and TDRD1.

Its subcellular location is the cytoplasm. Functionally, plays a central role during spermatogenesis by repressing transposable elements and preventing their mobilization, which is essential for the germline integrity. Acts via the piRNA metabolic process, which mediates the repression of transposable elements during meiosis by forming complexes composed of piRNAs and Piwi proteins and governs the methylation and subsequent repression of transposons. Its association with pi-bodies suggests a participation in the primary piRNAs metabolic process. Required prior to the pachytene stage to facilitate the production of multiple types of piRNAs, including those associated with repeats involved in the regulation of retrotransposons. May act by mediating protein-protein interactions during germ cell maturation. This chain is Ankyrin repeat, SAM and basic leucine zipper domain-containing protein 1 (ASZ1), found in Oryctolagus cuniculus (Rabbit).